Consider the following 399-residue polypeptide: Putative gustatory receptor 59e (399 aa).

Over 1–33 the chain is Cytoplasmic; it reads MDSSYWENLLLTINRFLGVYPSGRVGVLRWLHT. The helical transmembrane segment at 34–54 threads the bilayer; it reads LWSLFLLMYIWTGSIVKCLEF. Residues 55 to 65 lie on the Extracellular side of the membrane; the sequence is TVEIPTIEKLL. A helical membrane pass occupies residues 66 to 86; sequence YLMEFPGNMATIAILVYYAVL. Residues 87 to 120 are Cytoplasmic-facing; that stretch reads NRPLAHGAELQIERIITGLKGKAKRLVYKRHGQR. Residues 121–141 traverse the membrane as a helical segment; sequence TLHLMATTLVFHGLCVLVDVV. At 142–206 the chain is on the extracellular side; sequence NYDFEFWTTW…RPPQGSTKLD (65 aa). A helical membrane pass occupies residues 207-227; it reads ACYESAFAVLVDAGGGSALMI. Residues 228–250 are Cytoplasmic-facing; it reads EEMRYTCNLIEQVHSQFLLRFGL. Residues 251–271 traverse the membrane as a helical segment; the sequence is YLVLNLLNSLVSICVELYLIF. Topologically, residues 272-282 are extracellular; sequence NFFETPLWEES. Residues 283–303 form a helical membrane-spanning segment; the sequence is VLLVYRLLWLAMHGGRIWFIL. Topologically, residues 304–361 are cytoplasmic; it reads SVNEQILEQKCNLCQLLNELEVCSSRLQRTINRFLLQLQRSIDQPLEACGIVTLDTRS. Residues 362–382 form a helical membrane-spanning segment; that stretch reads LGGFIGVLMAIVIFLIQIGLG. N-linked (GlcNAc...) asparagine glycans are attached at residues asparagine 383 and asparagine 392. Topologically, residues 383 to 399 are extracellular; that stretch reads NKSLMGVALNRSNWVYV.

Belongs to the insect chemoreceptor superfamily. Gustatory receptor (GR) family. Gr10a subfamily. In terms of tissue distribution, expressed in the adult labellar chemosensory neurons. In larvae, is expressed in neurons of the terminal external chemosensory organ.

It localises to the cell membrane. In terms of biological role, probable gustatory receptor which mediates acceptance or avoidance behavior, depending on its substrates. This is Putative gustatory receptor 59e (Gr59e) from Drosophila melanogaster (Fruit fly).